The following is a 527-amino-acid chain: Bromodomain-containing protein 9 (527 aa).

Over residues 1–16 (MNVSVTKRRKKKKKKK) the composition is skewed to basic residues. Residues 1-54 (MNVSVTKRRKKKKKKKSEKEKDKYLDEDERRRRKEEKKRKREKEQCDSEGETEV) are disordered. Basic and acidic residues predominate over residues 17 to 30 (SEKEKDKYLDEDER). Residues 31–41 (RRRKEEKKRKR) show a composition bias toward basic residues. Residues 78–182 (NESTPLQQLL…HTGFKMMSKA (105 aa)) enclose the Bromo domain. The segment at 156 to 158 (TYN) is histone H4K5ac H4K8ac and histone H4K5bu H4K8bu binding. A compositionally biased stretch (basic and acidic residues) spans 468-478 (DFHDVHNDRGG). The disordered stretch occupies residues 468–527 (DFHDVHNDRGGSRPSSSSSMSNNSERDHHLGSPSRISVGEQQDIHDPYEFLQSPETDNQN). Over residues 479–490 (SRPSSSSSMSNN) the composition is skewed to low complexity.

In terms of assembly, binds acetylated histones H3 and H4. Binds butyrylated histone H4.

Its subcellular location is the nucleus. In terms of biological role, plays a role in chromatin remodeling and regulation of transcription. Acts as a chromatin reader that recognizes and binds acylated histones: binds histones that are acetylated and/or butyrylated. The protein is Bromodomain-containing protein 9 (brd9) of Xenopus laevis (African clawed frog).